Here is a 102-residue protein sequence, read N- to C-terminus: Integration host factor subunit alpha (102 aa).

The tract at residues Phe-49–Glu-70 is disordered.

Belongs to the bacterial histone-like protein family. Heterodimer of an alpha and a beta chain.

In terms of biological role, this protein is one of the two subunits of integration host factor, a specific DNA-binding protein that functions in genetic recombination as well as in transcriptional and translational control. This chain is Integration host factor subunit alpha, found in Nitrosomonas europaea (strain ATCC 19718 / CIP 103999 / KCTC 2705 / NBRC 14298).